A 575-amino-acid polypeptide reads, in one-letter code: uncharacterized protein (575 aa).

Positions 1–28 (MSNLLWKSLVVSPAVLGATLLVSSAAIA) are cleaved as a signal peptide. The SLH domain maps to 87–151 (SVSQFSDVQP…DRVNELIATA (65 aa)). Positions 158-196 (KQDLATLQRLQEEFSAELATLRGRVDALEARTAELEANQ) form a coiled coil.

The protein belongs to the OprB family.

This is an uncharacterized protein from Nostoc sp. (strain PCC 7120 / SAG 25.82 / UTEX 2576).